Here is an 89-residue protein sequence, read N- to C-terminus: Small ribosomal subunit protein bS20 (89 aa).

The disordered stretch occupies residues 1–29 (MTLANIKSAKKRAVQSEKRRQHNASQRSM).

This sequence belongs to the bacterial ribosomal protein bS20 family.

Binds directly to 16S ribosomal RNA. In Haemophilus influenzae (strain 86-028NP), this protein is Small ribosomal subunit protein bS20.